The primary structure comprises 662 residues: Mitochondrial Rho GTPase 1 (662 aa).

At 1 to 634 (MTKETIRVVI…AKDVDYRQTA (634 aa)) the chain is on the cytoplasmic side. One can recognise a Miro 1 domain in the interval 3–185 (KETIRVVICG…FYLCQRAITH (183 aa)). GTP contacts are provided by residues 12 to 19 (GDEGVGKS), 62 to 64 (DTS), and 116 to 119 (NKCD). 2 EF-hand domains span residues 201–236 (LAVMALKRIFLLSDLNQDSYLDDNEILGLQKKCFNK) and 330–365 (KGYRFLVDIFLKFDIDNDGGLNNQELHRLFKCTPGL). Positions 214, 216, 218, 220, 225, 343, 345, 347, and 354 each coordinate Ca(2+). The 166-residue stretch at 446 to 611 (RKVFNCFVIG…FIKITEAALD (166 aa)) folds into the Miro 2 domain. GTP is bound by residues 455 to 462 (GKPCCGKS), 491 to 495 (ELKGG), and 560 to 563 (SKAD). Residues 635–655 (LIFGSTVGFVALCSFTLMKLF) form a helical; Anchor for type IV membrane protein membrane-spanning segment. Over 656–662 (KSSKFSK) the chain is Mitochondrial intermembrane.

Belongs to the mitochondrial Rho GTPase family.

It is found in the mitochondrion outer membrane. Its function is as follows. Mitochondrial GTPase involved in mitochondrial trafficking. Probably involved in control of anterograde transport of mitochondria and their subcellular distribution. The protein is Mitochondrial Rho GTPase 1 (GEM1) of Saccharomyces cerevisiae (strain ATCC 204508 / S288c) (Baker's yeast).